The following is a 386-amino-acid chain: Succinyl-diaminopimelate desuccinylase (386 aa).

H73 serves as a coordination point for Zn(2+). The active site involves D75. D106 is a binding site for Zn(2+). E140 (proton acceptor) is an active-site residue. Zn(2+)-binding residues include E141, E169, and H355.

Belongs to the peptidase M20A family. DapE subfamily. Homodimer. Requires Zn(2+) as cofactor. The cofactor is Co(2+).

The catalysed reaction is N-succinyl-(2S,6S)-2,6-diaminopimelate + H2O = (2S,6S)-2,6-diaminopimelate + succinate. Its pathway is amino-acid biosynthesis; L-lysine biosynthesis via DAP pathway; LL-2,6-diaminopimelate from (S)-tetrahydrodipicolinate (succinylase route): step 3/3. Functionally, catalyzes the hydrolysis of N-succinyl-L,L-diaminopimelic acid (SDAP), forming succinate and LL-2,6-diaminopimelate (DAP), an intermediate involved in the bacterial biosynthesis of lysine and meso-diaminopimelic acid, an essential component of bacterial cell walls. The protein is Succinyl-diaminopimelate desuccinylase of Delftia acidovorans (strain DSM 14801 / SPH-1).